The chain runs to 825 residues: Probable inorganic carbon transporter subunit DabA (825 aa).

Zn(2+) contacts are provided by Cys-334, Asp-336, His-521, and Cys-536.

This sequence belongs to the inorganic carbon transporter (TC 9.A.2) DabA family. In terms of assembly, forms a complex with DabB. Zn(2+) is required as a cofactor.

The protein resides in the cell inner membrane. Its function is as follows. Part of an energy-coupled inorganic carbon pump. This is Probable inorganic carbon transporter subunit DabA from Acidithiobacillus ferrooxidans (strain ATCC 23270 / DSM 14882 / CIP 104768 / NCIMB 8455) (Ferrobacillus ferrooxidans (strain ATCC 23270)).